Consider the following 62-residue polypeptide: U10-hottentoxin-Hj2a (62 aa).

Residues 1–22 form the signal peptide; it reads MQKLLIILILFCILKFNVDVEG. Disulfide bonds link Cys-28–Cys-46, Cys-33–Cys-59, and Cys-37–Cys-61.

Belongs to the short scorpion toxin superfamily. Potassium channel inhibitor family. Alpha-KTx 23 subfamily. Expressed by the venom gland.

The protein resides in the secreted. Functionally, may block potassium channels. This chain is U10-hottentoxin-Hj2a, found in Hottentotta judaicus (Black scorpion).